Consider the following 421-residue polypeptide: Serine--tRNA ligase (421 aa).

229–231 (TAE) is a binding site for L-serine. 260 to 262 (RSE) is a binding site for ATP. Residue E283 participates in L-serine binding. An ATP-binding site is contributed by 347 to 350 (EISS). Position 382 (S382) interacts with L-serine.

Belongs to the class-II aminoacyl-tRNA synthetase family. Type-1 seryl-tRNA synthetase subfamily. Homodimer. The tRNA molecule binds across the dimer.

The protein localises to the cytoplasm. It carries out the reaction tRNA(Ser) + L-serine + ATP = L-seryl-tRNA(Ser) + AMP + diphosphate + H(+). It catalyses the reaction tRNA(Sec) + L-serine + ATP = L-seryl-tRNA(Sec) + AMP + diphosphate + H(+). Its pathway is aminoacyl-tRNA biosynthesis; selenocysteinyl-tRNA(Sec) biosynthesis; L-seryl-tRNA(Sec) from L-serine and tRNA(Sec): step 1/1. Its function is as follows. Catalyzes the attachment of serine to tRNA(Ser). Is also able to aminoacylate tRNA(Sec) with serine, to form the misacylated tRNA L-seryl-tRNA(Sec), which will be further converted into selenocysteinyl-tRNA(Sec). The chain is Serine--tRNA ligase from Symbiobacterium thermophilum (strain DSM 24528 / JCM 14929 / IAM 14863 / T).